The sequence spans 425 residues: Serine--tRNA ligase (425 aa).

Position 230-232 (230-232) interacts with L-serine; that stretch reads TAE. 261 to 263 serves as a coordination point for ATP; sequence RSE. Glu-284 serves as a coordination point for L-serine. 348 to 351 serves as a coordination point for ATP; that stretch reads EISS. Residue Ser-384 participates in L-serine binding.

Belongs to the class-II aminoacyl-tRNA synthetase family. Type-1 seryl-tRNA synthetase subfamily. As to quaternary structure, homodimer. The tRNA molecule binds across the dimer.

The protein localises to the cytoplasm. It carries out the reaction tRNA(Ser) + L-serine + ATP = L-seryl-tRNA(Ser) + AMP + diphosphate + H(+). It catalyses the reaction tRNA(Sec) + L-serine + ATP = L-seryl-tRNA(Sec) + AMP + diphosphate + H(+). It functions in the pathway aminoacyl-tRNA biosynthesis; selenocysteinyl-tRNA(Sec) biosynthesis; L-seryl-tRNA(Sec) from L-serine and tRNA(Sec): step 1/1. Functionally, catalyzes the attachment of serine to tRNA(Ser). Is also able to aminoacylate tRNA(Sec) with serine, to form the misacylated tRNA L-seryl-tRNA(Sec), which will be further converted into selenocysteinyl-tRNA(Sec). The protein is Serine--tRNA ligase of Streptococcus sanguinis (strain SK36).